The sequence spans 217 residues: Probable GTP-binding protein EngB (217 aa).

Residues 37 to 214 enclose the EngB-type G domain; it reads AGVEVAFAGR…RAAMARLIGE (178 aa). GTP contacts are provided by residues 45–52, 72–76, 92–95, 159–162, and 193–195; these read GRSNVGKS, GRTQE, DMPG, TKAD, and TSS. Mg(2+) is bound by residues S52 and T74.

It belongs to the TRAFAC class TrmE-Era-EngA-EngB-Septin-like GTPase superfamily. EngB GTPase family. The cofactor is Mg(2+).

In terms of biological role, necessary for normal cell division and for the maintenance of normal septation. This is Probable GTP-binding protein EngB from Nitrobacter hamburgensis (strain DSM 10229 / NCIMB 13809 / X14).